Consider the following 402-residue polypeptide: MRHTWRWFGPVDRVSVQDAAQAGAHGIVSALHHIPTGDVWPVDEIGKRQEEVRAGGLEWEVVESVPVSECIKTQTGPWREHVANWQETLRRLSAAGIRTVCYNFMPVLDWTRTDLRWTARHGAKAMRFDRIDFAAFDIHLLERPAAHEDYDTATREAAERRFREMTEERRLALSRNIGAGLPGSADGYSLPQLREHLRTYDGVSREKLQRHLVEFLAEVAPVAERTGINICAHPDDPPWALLGLPRILSNAEDYAFMLREVDSPANGVTLCTGSLGALAANDLPAMTRQFASRIHFVHLRNVLREEVRTPCSFYEDEHLEGDTDMVAVIAELLQEEQRRRAAGRVDHQIPMRPDHGQEILDDLSRGAQPGYPAIGRLKGLAELRGIERALSHATYGLSAATR.

Belongs to the mannonate dehydratase family. It depends on Fe(2+) as a cofactor. Mn(2+) is required as a cofactor.

It carries out the reaction D-mannonate = 2-dehydro-3-deoxy-D-gluconate + H2O. The protein operates within carbohydrate metabolism; pentose and glucuronate interconversion. Its function is as follows. Catalyzes the dehydration of D-mannonate. The chain is Mannonate dehydratase from Rhizobium meliloti (strain 1021) (Ensifer meliloti).